Consider the following 155-residue polypeptide: Ribosome maturation factor RimP (155 aa).

The protein belongs to the RimP family.

The protein localises to the cytoplasm. Required for maturation of 30S ribosomal subunits. This Listeria innocua serovar 6a (strain ATCC BAA-680 / CLIP 11262) protein is Ribosome maturation factor RimP.